The sequence spans 134 residues: Putative toxin MJ0605 (134 aa).

This sequence belongs to the UPF0332 family.

Putative toxin component of a putative type VII toxin-antitoxin (TA) system. Its cognate antitoxin might be MJ0604. The polypeptide is Putative toxin MJ0605 (Methanocaldococcus jannaschii (strain ATCC 43067 / DSM 2661 / JAL-1 / JCM 10045 / NBRC 100440) (Methanococcus jannaschii)).